The primary structure comprises 349 residues: Glycerol-1-phosphate dehydrogenase [NAD(P)+] (349 aa).

Residues Gly95 to Asp99 and Thr117 to Ser120 each bind NAD(+). A substrate-binding site is contributed by Asp122. Ser126 lines the NAD(+) pocket. Asp169 is a substrate binding site. 2 residues coordinate Zn(2+): Asp169 and His249. His253 provides a ligand contact to substrate. His265 is a Zn(2+) binding site.

It belongs to the glycerol-1-phosphate dehydrogenase family. Homodimer. The cofactor is Zn(2+).

It is found in the cytoplasm. It catalyses the reaction sn-glycerol 1-phosphate + NAD(+) = dihydroxyacetone phosphate + NADH + H(+). The enzyme catalyses sn-glycerol 1-phosphate + NADP(+) = dihydroxyacetone phosphate + NADPH + H(+). It participates in membrane lipid metabolism; glycerophospholipid metabolism. Its function is as follows. Catalyzes the NAD(P)H-dependent reduction of dihydroxyacetonephosphate (DHAP or glycerone phosphate) to glycerol 1-phosphate (G1P). The G1P thus generated is used as the glycerophosphate backbone of phospholipids in the cellular membranes of Archaea. This is Glycerol-1-phosphate dehydrogenase [NAD(P)+] from Hyperthermus butylicus (strain DSM 5456 / JCM 9403 / PLM1-5).